Reading from the N-terminus, the 161-residue chain is Cyclic pyranopterin monophosphate synthase (161 aa).

Residues 75–77 (MCH) and 115–116 (ME) each bind substrate. Residue Asp130 is part of the active site.

The protein belongs to the MoaC family. As to quaternary structure, homohexamer; trimer of dimers.

It catalyses the reaction (8S)-3',8-cyclo-7,8-dihydroguanosine 5'-triphosphate = cyclic pyranopterin phosphate + diphosphate. It functions in the pathway cofactor biosynthesis; molybdopterin biosynthesis. In terms of biological role, catalyzes the conversion of (8S)-3',8-cyclo-7,8-dihydroguanosine 5'-triphosphate to cyclic pyranopterin monophosphate (cPMP). The protein is Cyclic pyranopterin monophosphate synthase of Bacillus mycoides (strain KBAB4) (Bacillus weihenstephanensis).